Consider the following 164-residue polypeptide: UPF0304 protein KPK_1463 (164 aa).

It belongs to the UPF0304 family.

The protein is UPF0304 protein KPK_1463 of Klebsiella pneumoniae (strain 342).